We begin with the raw amino-acid sequence, 269 residues long: Formamidopyrimidine-DNA glycosylase (269 aa).

The active-site Schiff-base intermediate with DNA is the Pro2. Catalysis depends on Glu3, which acts as the Proton donor. The Proton donor; for beta-elimination activity role is filled by Lys57. Residues His90, Arg109, and Arg150 each contribute to the DNA site. Residues 235–269 (QVYGKAGEQCPNCAELIQELKIGQRNTFYCSSCQV) form an FPG-type zinc finger. Arg259 functions as the Proton donor; for delta-elimination activity in the catalytic mechanism.

It belongs to the FPG family. As to quaternary structure, monomer. It depends on Zn(2+) as a cofactor.

It carries out the reaction Hydrolysis of DNA containing ring-opened 7-methylguanine residues, releasing 2,6-diamino-4-hydroxy-5-(N-methyl)formamidopyrimidine.. The catalysed reaction is 2'-deoxyribonucleotide-(2'-deoxyribose 5'-phosphate)-2'-deoxyribonucleotide-DNA = a 3'-end 2'-deoxyribonucleotide-(2,3-dehydro-2,3-deoxyribose 5'-phosphate)-DNA + a 5'-end 5'-phospho-2'-deoxyribonucleoside-DNA + H(+). In terms of biological role, involved in base excision repair of DNA damaged by oxidation or by mutagenic agents. Acts as a DNA glycosylase that recognizes and removes damaged bases. Has a preference for oxidized purines, such as 7,8-dihydro-8-oxoguanine (8-oxoG). Has AP (apurinic/apyrimidinic) lyase activity and introduces nicks in the DNA strand. Cleaves the DNA backbone by beta-delta elimination to generate a single-strand break at the site of the removed base with both 3'- and 5'-phosphates. The sequence is that of Formamidopyrimidine-DNA glycosylase from Vibrio atlanticus (strain LGP32) (Vibrio splendidus (strain Mel32)).